The sequence spans 118 residues: UPF0102 protein Cphy_2398 (118 aa).

Belongs to the UPF0102 family.

The chain is UPF0102 protein Cphy_2398 from Lachnoclostridium phytofermentans (strain ATCC 700394 / DSM 18823 / ISDg) (Clostridium phytofermentans).